Here is a 183-residue protein sequence, read N- to C-terminus: dTTP/UTP pyrophosphatase (183 aa).

D64 functions as the Proton acceptor in the catalytic mechanism.

It belongs to the Maf family. YhdE subfamily. Requires a divalent metal cation as cofactor.

Its subcellular location is the cytoplasm. It carries out the reaction dTTP + H2O = dTMP + diphosphate + H(+). The catalysed reaction is UTP + H2O = UMP + diphosphate + H(+). Functionally, nucleoside triphosphate pyrophosphatase that hydrolyzes dTTP and UTP. May have a dual role in cell division arrest and in preventing the incorporation of modified nucleotides into cellular nucleic acids. This chain is dTTP/UTP pyrophosphatase, found in Acinetobacter baylyi (strain ATCC 33305 / BD413 / ADP1).